We begin with the raw amino-acid sequence, 397 residues long: GTPase Obg (397 aa).

An Obg domain is found at methionine 1–leucine 159. Residues threonine 128–glutamate 148 are disordered. The segment covering arginine 129 to glycine 144 has biased composition (polar residues). One can recognise an OBG-type G domain in the interval alanine 160–glutamate 333. GTP contacts are provided by residues glycine 166–serine 173, phenylalanine 191–valine 195, aspartate 213–glycine 216, asparagine 283–aspartate 286, and serine 314–leucine 316. 2 residues coordinate Mg(2+): serine 173 and threonine 193. Acidic residues predominate over residues alanine 336–glutamate 347. Residues alanine 336–glutamate 397 form a disordered region. Positions glutamate 349–alanine 370 are enriched in basic and acidic residues. The span at aspartate 378–valine 390 shows a compositional bias: acidic residues.

It belongs to the TRAFAC class OBG-HflX-like GTPase superfamily. OBG GTPase family. Monomer. Mg(2+) is required as a cofactor.

It is found in the cytoplasm. Its function is as follows. An essential GTPase which binds GTP, GDP and possibly (p)ppGpp with moderate affinity, with high nucleotide exchange rates and a fairly low GTP hydrolysis rate. Plays a role in control of the cell cycle, stress response, ribosome biogenesis and in those bacteria that undergo differentiation, in morphogenesis control. This chain is GTPase Obg, found in Marinobacter nauticus (strain ATCC 700491 / DSM 11845 / VT8) (Marinobacter aquaeolei).